The following is a 70-amino-acid chain: Dermaseptin-H3 (70 aa).

The first 22 residues, 1 to 22, serve as a signal peptide directing secretion; that stretch reads MAFLKKSLFLVLFLGMVSLSIC. A propeptide spanning residues 23–43 is cleaved from the precursor; it reads EEEKRENEDEELQEDDEQSEM. The segment at 25–44 is disordered; it reads EKRENEDEELQEDDEQSEMK. Residues 30 to 40 are compositionally biased toward acidic residues; the sequence is EDEELQEDDEQ. A Leucine amide modification is found at Leu70.

In terms of tissue distribution, expressed by the skin glands.

It is found in the secreted. In terms of biological role, has antibacterial activity against the Gram-negative bacteria E.coli and P.aeruginosa, and the Gram-positive bacteria S.aureus and M.luteus. Has antiprotozoal activity against L.amazonensis. No hemolytic activity. This Pithecopus hypochondrialis (Orange-legged leaf frog) protein is Dermaseptin-H3.